A 506-amino-acid polypeptide reads, in one-letter code: Maturase K (506 aa).

The protein belongs to the intron maturase 2 family. MatK subfamily.

It is found in the plastid. The protein localises to the chloroplast. In terms of biological role, usually encoded in the trnK tRNA gene intron. Probably assists in splicing its own and other chloroplast group II introns. The chain is Maturase K from Cytisus scoparius (Scotch broom).